The chain runs to 364 residues: tRNA 2-selenouridine synthase (364 aa).

In terms of domain architecture, Rhodanese spans 14–136 (VLNNTPLIDV…AFRNWLMQET (123 aa)). Cys97 acts as the S-selanylcysteine intermediate in catalysis.

This sequence belongs to the SelU family. In terms of assembly, monomer.

The catalysed reaction is 5-methylaminomethyl-2-thiouridine(34) in tRNA + selenophosphate + (2E)-geranyl diphosphate + H2O + H(+) = 5-methylaminomethyl-2-selenouridine(34) in tRNA + (2E)-thiogeraniol + phosphate + diphosphate. It carries out the reaction 5-methylaminomethyl-2-thiouridine(34) in tRNA + (2E)-geranyl diphosphate = 5-methylaminomethyl-S-(2E)-geranyl-thiouridine(34) in tRNA + diphosphate. It catalyses the reaction 5-methylaminomethyl-S-(2E)-geranyl-thiouridine(34) in tRNA + selenophosphate + H(+) = 5-methylaminomethyl-2-(Se-phospho)selenouridine(34) in tRNA + (2E)-thiogeraniol. The enzyme catalyses 5-methylaminomethyl-2-(Se-phospho)selenouridine(34) in tRNA + H2O = 5-methylaminomethyl-2-selenouridine(34) in tRNA + phosphate. In terms of biological role, involved in the post-transcriptional modification of the uridine at the wobble position (U34) of tRNA(Lys), tRNA(Glu) and tRNA(Gln). Catalyzes the conversion of 2-thiouridine (S2U-RNA) to 2-selenouridine (Se2U-RNA). Acts in a two-step process involving geranylation of 2-thiouridine (S2U) to S-geranyl-2-thiouridine (geS2U) and subsequent selenation of the latter derivative to 2-selenouridine (Se2U) in the tRNA chain. The protein is tRNA 2-selenouridine synthase of Sulfurovum sp. (strain NBC37-1).